Here is an 81-residue protein sequence, read N- to C-terminus: Cell division protein ZapB (81 aa).

The stretch at 6–80 (EVFEKLEAKV…LQALLGRMEE (75 aa)) forms a coiled coil. The span at 38 to 47 (SLAQDVQSAQ) shows a compositional bias: polar residues. Positions 38 to 67 (SLAQDVQSAQHQREELERENNHLKEQQSGW) are disordered. The segment covering 48-62 (HQREELERENNHLKE) has biased composition (basic and acidic residues).

It belongs to the ZapB family. In terms of assembly, homodimer. The ends of the coiled-coil dimer bind to each other, forming polymers. Interacts with FtsZ.

It localises to the cytoplasm. Functionally, non-essential, abundant cell division factor that is required for proper Z-ring formation. It is recruited early to the divisome by direct interaction with FtsZ, stimulating Z-ring assembly and thereby promoting cell division earlier in the cell cycle. Its recruitment to the Z-ring requires functional FtsA or ZipA. This Citrobacter koseri (strain ATCC BAA-895 / CDC 4225-83 / SGSC4696) protein is Cell division protein ZapB.